A 130-amino-acid polypeptide reads, in one-letter code: MKQVNFCGTGRRKTAVARVILTNGTGKITINTKNFETYLPQPTTRLDMLQPLIISEKKDVYDVRVNVNGGGLCAQAGAIRLGIARALLESIPELRPVLKKAGLLTRDARCVERKKYGLKKARRAPQFSKR.

It belongs to the universal ribosomal protein uS9 family.

This Phytoplasma australiense protein is Small ribosomal subunit protein uS9.